The following is a 101-amino-acid chain: Signal recognition particle 19 kDa protein (101 aa).

Belongs to the SRP19 family. As to quaternary structure, part of the signal recognition particle protein translocation system, which is composed of SRP and FtsY. Archaeal SRP consists of a 7S RNA molecule of 300 nucleotides and two protein subunits: SRP54 and SRP19.

It localises to the cytoplasm. Its function is as follows. Involved in targeting and insertion of nascent membrane proteins into the cytoplasmic membrane. Binds directly to 7S RNA and mediates binding of the 54 kDa subunit of the SRP. In Methanosarcina acetivorans (strain ATCC 35395 / DSM 2834 / JCM 12185 / C2A), this protein is Signal recognition particle 19 kDa protein.